The chain runs to 196 residues: Glycerol-3-phosphate acyltransferase 2 (196 aa).

Helical transmembrane passes span glycine 2–isoleucine 22, valine 52–isoleucine 72, isoleucine 80–phenylalanine 100, isoleucine 112–valine 132, and tyrosine 137–leucine 156.

It belongs to the PlsY family. Probably interacts with PlsX.

It is found in the cell inner membrane. It carries out the reaction an acyl phosphate + sn-glycerol 3-phosphate = a 1-acyl-sn-glycero-3-phosphate + phosphate. Its pathway is lipid metabolism; phospholipid metabolism. Catalyzes the transfer of an acyl group from acyl-phosphate (acyl-PO(4)) to glycerol-3-phosphate (G3P) to form lysophosphatidic acid (LPA). This enzyme utilizes acyl-phosphate as fatty acyl donor, but not acyl-CoA or acyl-ACP. This Thermotoga maritima (strain ATCC 43589 / DSM 3109 / JCM 10099 / NBRC 100826 / MSB8) protein is Glycerol-3-phosphate acyltransferase 2.